Consider the following 323-residue polypeptide: Pseudouridine-5'-phosphate glycosidase (323 aa).

Residue Glu43 is the Proton donor of the active site. Substrate is bound by residues Lys104 and Val124. Residue Asp156 coordinates Mn(2+). 158–160 (SAD) lines the substrate pocket. The active-site Nucleophile is Lys177.

This sequence belongs to the pseudouridine-5'-phosphate glycosidase family. In terms of assembly, homotrimer. Mn(2+) is required as a cofactor.

The enzyme catalyses D-ribose 5-phosphate + uracil = psi-UMP + H2O. Its function is as follows. Catalyzes the reversible cleavage of pseudouridine 5'-phosphate (PsiMP) to ribose 5-phosphate and uracil. Functions biologically in the cleavage direction, as part of a pseudouridine degradation pathway. The sequence is that of Pseudouridine-5'-phosphate glycosidase from Streptomyces griseus subsp. griseus (strain JCM 4626 / CBS 651.72 / NBRC 13350 / KCC S-0626 / ISP 5235).